An 85-amino-acid polypeptide reads, in one-letter code: uncharacterized protein (85 aa).

The protein belongs to the ycf76 family.

It is found in the plastid. It localises to the chloroplast. This is an uncharacterized protein from Zea mays (Maize).